The primary structure comprises 429 residues: Mannose-6-phosphate isomerase (429 aa).

Residues Gln109, His111, Glu136, and His281 each coordinate Zn(2+). Arg300 is an active-site residue.

Belongs to the mannose-6-phosphate isomerase type 1 family. Zn(2+) serves as cofactor.

The protein resides in the cytoplasm. The enzyme catalyses D-mannose 6-phosphate = D-fructose 6-phosphate. It functions in the pathway nucleotide-sugar biosynthesis; GDP-alpha-D-mannose biosynthesis; alpha-D-mannose 1-phosphate from D-fructose 6-phosphate: step 1/2. Involved in the synthesis of the GDP-mannose and dolichol-phosphate-mannose required for a number of critical mannosyl transfer reactions. This Eremothecium gossypii (strain ATCC 10895 / CBS 109.51 / FGSC 9923 / NRRL Y-1056) (Yeast) protein is Mannose-6-phosphate isomerase (PMI1).